Reading from the N-terminus, the 174-residue chain is Nucleoside diphosphate kinase (174 aa).

Positions 14, 62, 90, 96, and 107 each coordinate ATP. The Pros-phosphohistidine intermediate role is filled by H123.

It belongs to the NDK family. The cofactor is Mg(2+).

The protein resides in the cytoplasm. It catalyses the reaction a 2'-deoxyribonucleoside 5'-diphosphate + ATP = a 2'-deoxyribonucleoside 5'-triphosphate + ADP. It carries out the reaction a ribonucleoside 5'-diphosphate + ATP = a ribonucleoside 5'-triphosphate + ADP. Functionally, major role in the synthesis of nucleoside triphosphates other than ATP. The ATP gamma phosphate is transferred to the NDP beta phosphate via a ping-pong mechanism, using a phosphorylated active-site intermediate. The sequence is that of Nucleoside diphosphate kinase from Thermococcus kodakarensis (strain ATCC BAA-918 / JCM 12380 / KOD1) (Pyrococcus kodakaraensis (strain KOD1)).